The primary structure comprises 428 residues: Adenylosuccinate synthetase (428 aa).

Residues 12–18 (GDEGKGK) and 40–42 (GHT) each bind GTP. Asp-13 acts as the Proton acceptor in catalysis. The Mg(2+) site is built by Asp-13 and Gly-40. IMP contacts are provided by residues 13–16 (DEGK), 38–41 (NAGH), Thr-128, Arg-142, Gln-223, Thr-238, and Arg-302. Residue His-41 is the Proton donor of the active site. A substrate-binding site is contributed by 298-304 (VTTGRPR). GTP is bound by residues Arg-304, 330–332 (KLD), and 412–414 (GTG).

The protein belongs to the adenylosuccinate synthetase family. Homodimer. Requires Mg(2+) as cofactor.

Its subcellular location is the cytoplasm. The catalysed reaction is IMP + L-aspartate + GTP = N(6)-(1,2-dicarboxyethyl)-AMP + GDP + phosphate + 2 H(+). Its pathway is purine metabolism; AMP biosynthesis via de novo pathway; AMP from IMP: step 1/2. Functionally, plays an important role in the de novo pathway of purine nucleotide biosynthesis. Catalyzes the first committed step in the biosynthesis of AMP from IMP. The protein is Adenylosuccinate synthetase of Bifidobacterium adolescentis (strain ATCC 15703 / DSM 20083 / NCTC 11814 / E194a).